Consider the following 54-residue polypeptide: Large ribosomal subunit protein bL33 (54 aa).

The protein belongs to the bacterial ribosomal protein bL33 family.

The protein is Large ribosomal subunit protein bL33 of Corynebacterium jeikeium (strain K411).